The primary structure comprises 485 residues: Vacuolar fusion protein CCZ1 homolog (485 aa).

This sequence belongs to the CCZ1 family. As to quaternary structure, component of the Mon1-Ccz1 guanyl-nucleotide exchange factor complex made up of Mon1, Ccz1 and Bulli; the interaction of Bulli with the Mon1-Ccz1 heterodimer is mediated via the C-terminal Mic1 domain of Bulli. Mon1 and Ccz1 form a stable complex which displays Rab7 GEF activity with or without Bulli; GEF activity is enhanced by Bulli possibly by improving membrane association of the complex. Interacts with Rab5 and Rab7; preferentially binds GTP-bound Rab5 and GDP-bound Rab7.

It is found in the cytoplasm. The protein localises to the cytosol. With respect to regulation, the Rab7 guanyl-nucleotide exchange factor (GEF) activity of the Mon1-Ccz1 complex is autoinhibited by the N-terminal disordered region of Mon1. GEF activity is stimulated by Rab5-mediated recruitment to membranes. In terms of biological role, part of the Mon1-Ccz1 guanyl-nucleotide exchange factor complex specific for Rab7 that promotes the exchange of GDP to GTP, converting Rab7 from an inactive GDP-bound form into an active GTP-bound form. Required for recruitment of Rab7 to endosomal and autophagosomal membranes to mediate endolysosomal and autolysosomal vesicle maturation. Required for fusion of multivesicular bodies and lysosomes but not their formation or trafficking. Involved in the replacement of Rab5 (and possibly Rab4) with Rab7, also known as Rab conversion or the Rab cascade, during endosomal maturation. The Mon1-Ccz1 complex is recruited to phosphatidylinositol 3-phosphate (PtdIns[3]P) enriched membranes by Rab5, which stimulates recruitment and guanyl-nucleotide exchange of Rab7. Together with Rab7 required for autolysosome formation in fat cells and autophagic degradation during starvation-induced basal and developmental autophagy. This Drosophila melanogaster (Fruit fly) protein is Vacuolar fusion protein CCZ1 homolog.